The following is a 1015-amino-acid chain: Collagen alpha-2(I) chain (1015 aa).

The interval 1-1015 is disordered; that stretch reads SGGFDFSFLP…FGYEGDFYRA (1015 aa). Pro-10 and Pro-13 each carry 4-hydroxyproline. Gly residues predominate over residues 20-30; sequence KGVGLGPGPMG. The residue at position 38 (Pro-38) is a 4-hydroxyproline. Positions 43 to 69 are enriched in low complexity; sequence QGPAGEPGEPGQTGPAGARGPAGPPGK. Residues 70–84 show a composition bias toward basic and acidic residues; sequence AGEDGHPGKPGRPGE. At Lys-106 the chain carries 5-hydroxylysine; alternate. The O-linked (Gal...) hydroxylysine; alternate glycan is linked to Lys-106. Composition is skewed to low complexity over residues 140-169, 194-208, and 235-250; these read VGAPGPAGARGSDGSVGPVGPAGPIGSAGP, AGPRGEQGLPGVSGP, and PGPVGAVGATGARGLV. A compositionally biased stretch (gly residues) spans 302–311; sequence GLRGGPGSRG. Residues 324–340 are compositionally biased toward low complexity; it reads PAGSRGASGPAGVRGPS. 2 positions are modified to 4-hydroxyproline: Pro-346 and Pro-349. Residues 441 to 450 are compositionally biased toward gly residues; sequence GVQGGKGEQG. Residues 497–514 show a composition bias toward low complexity; it reads PGESGAAGPVGPIGSRGP. The span at 534–545 shows a compositional bias: gly residues; it reads GTAGPGSGGLPG. Low complexity-rich tracts occupy residues 568–612 and 619–639; these read VGTT…PRGS and VGPAGPNGFAGPAGAAGQPGA. The span at 640–649 shows a compositional bias: basic and acidic residues; it reads KGERGTKGPK. The segment covering 657 to 670 has biased composition (low complexity); that stretch reads PTGPVGAAGPSGPN. Gly residues predominate over residues 674 to 686; the sequence is GPAGGRGDGGPPG. The span at 687-697 shows a compositional bias: low complexity; the sequence is LTGFPGAAGRT. The span at 734 to 743 shows a compositional bias: gly residues; the sequence is GETGAGGPPG. Composition is skewed to low complexity over residues 751–778, 786–799, 846–868, and 877–897; these read SGEPGTAGPPGTAGPQGLLGAPGILGLP, LPGVAGAVGEPGPL, YAGNAGPVGAAGAPGPHGTVGPA, and PGPAGSVGPVGAVGPRGPSGP. A compositionally biased stretch (basic and acidic residues) spans 901-912; sequence RGDKGEAGDKGP. Residues 987-997 are compositionally biased toward pro residues; that stretch reads PAGPPGPPGPP.

The protein belongs to the fibrillar collagen family. As to quaternary structure, trimers of one alpha 2(I) and two alpha 1(I) chains. Interacts (via C-terminus) with TMEM131 (via PapD-L domain); the interaction is direct and is involved in assembly and TRAPPIII ER-to-Golgi transport complex-dependent secretion of collagen. Post-translationally, prolines at the third position of the tripeptide repeating unit (G-X-Y) are hydroxylated in some or all of the chains. In terms of tissue distribution, expressed in bones.

It localises to the secreted. The protein localises to the extracellular space. It is found in the extracellular matrix. In terms of biological role, type I collagen is a member of group I collagen (fibrillar forming collagen). The polypeptide is Collagen alpha-2(I) chain (Doedicurus sp. (South American giant glyptodont)).